The following is a 284-amino-acid chain: Four and a half LIM domains protein 5 (284 aa).

The C4-type zinc finger occupies 8–32 (CQYCTASLLGKKYVLKDDSPYCVTC). LIM zinc-binding domains lie at 39–100 (NYCE…ECSS), 101–160 (KCFH…KEFA), 161–220 (HYCN…LYAN), and 223–283 (VACS…MDTD).

As to quaternary structure, interacts with CREM (via the third LIM domain). Interacts (via second LIM domain) with SPAG8. In terms of tissue distribution, testis-specific (at protein level).

The protein resides in the nucleus. May be involved in the regulation of spermatogenesis. Stimulates CREM transcriptional activity in a phosphorylation-independent manner. The protein is Four and a half LIM domains protein 5 (FHL5) of Homo sapiens (Human).